Reading from the N-terminus, the 604-residue chain is Numb-like protein (604 aa).

4 disordered regions span residues 1–68, 223–283, 372–457, and 531–604; these read MSRS…QWQA, GSFR…PVAA, ASAG…TLQP, and KAGA…EIEL. The region spanning 74 to 225 is the PID domain; it reads RKGTCSFPVR…RTSFAREGSF (152 aa). Ser-224 and Ser-228 each carry phosphoserine. A compositionally biased stretch (basic and acidic residues) spans 233–245; that stretch reads PAEREAGDKKKAE. Over residues 246–260 the composition is skewed to low complexity; the sequence is AAAAPAVAPGPAQPG. At Ser-263 the chain carries Phosphoserine. Thr-279 is modified (phosphothreonine). Residues 409-418 are compositionally biased toward basic and acidic residues; that stretch reads TPSEAERWLE. Ser-411 is subject to Phosphoserine. 2 stretches are compositionally biased toward low complexity: residues 427-441 and 542-552; these read QQQQ…QQQQ and SAPGGQARPRP. The span at 553–568 shows a compositional bias: pro residues; sequence NGAPWPPEPAPAPAPE.

As to quaternary structure, interacts (via PTB domain) with MAP3K7IP2 (via C-terminal). Interacts (via C-terminal) with TRAF6 (via TRAF domains). Associates with EPS15 and NOTCH1. As to expression, preferentially expressed in the nervous system. In the developing neocortex, expressed in postmitotic neurons in the cortical plate but not in progenitors within the ventricular zone.

It is found in the cytoplasm. Plays a role in the process of neurogenesis. Required throughout embryonic neurogenesis to maintain neural progenitor cells, also called radial glial cells (RGCs), by allowing their daughter cells to choose progenitor over neuronal cell fate. Not required for the proliferation of neural progenitor cells before the onset of embryonic neurogenesis. Also required postnatally in the subventricular zone (SVZ) neurogenesis by regulating SVZ neuroblasts survival and ependymal wall integrity. Negative regulator of NF-kappa-B signaling pathway. The inhibition of NF-kappa-B activation is mediated at least in part, by preventing MAP3K7IP2 to interact with polyubiquitin chains of TRAF6 and RIPK1 and by stimulating the 'Lys-48'-linked polyubiquitination and degradation of TRAF6 in cortical neurons. This chain is Numb-like protein (Numbl), found in Mus musculus (Mouse).